A 318-amino-acid polypeptide reads, in one-letter code: Mitochondrial coenzyme A transporter SLC25A42 (318 aa).

Solcar repeat units lie at residues 31–117, 129–214, and 224–312; these read RQVL…YKRI, LPPW…LKSL, and PYPF…MQIL. The next 6 membrane-spanning stretches (helical) occupy residues 33–53, 89–109, 135–155, 186–206, 230–250, and 293–313; these read VLSS…AVAP, LWRG…IQFS, LLAG…LDLV, LYFG…LSFF, MVFG…LDVV, and LKGP…QILL.

It belongs to the mitochondrial carrier (TC 2.A.29) family.

It localises to the mitochondrion inner membrane. It catalyses the reaction ADP(out) + CoA(in) = ADP(in) + CoA(out). The enzyme catalyses 3'-dephospho-CoA(in) + ADP(out) = 3'-dephospho-CoA(out) + ADP(in). It carries out the reaction adenosine 3',5'-bisphosphate(in) + ADP(out) = adenosine 3',5'-bisphosphate(out) + ADP(in). The catalysed reaction is AMP(in) + ADP(out) = AMP(out) + ADP(in). It catalyses the reaction dADP(in) + ADP(out) = dADP(out) + ADP(in). The enzyme catalyses ADP(in) + ATP(out) = ADP(out) + ATP(in). Mitochondrial carrier mediating the transport of coenzyme A (CoA) in mitochondria in exchange for intramitochondrial (deoxy)adenine nucleotides and adenosine 3',5'-diphosphate. This Mus musculus (Mouse) protein is Mitochondrial coenzyme A transporter SLC25A42 (Slc25a42).